Consider the following 101-residue polypeptide: Small ribosomal subunit protein uS14 (101 aa).

Belongs to the universal ribosomal protein uS14 family. As to quaternary structure, part of the 30S ribosomal subunit. Contacts proteins S3 and S10.

Functionally, binds 16S rRNA, required for the assembly of 30S particles and may also be responsible for determining the conformation of the 16S rRNA at the A site. This chain is Small ribosomal subunit protein uS14, found in Nitrosomonas europaea (strain ATCC 19718 / CIP 103999 / KCTC 2705 / NBRC 14298).